The chain runs to 286 residues: E3 SUMO-protein ligase K-bZIP (286 aa).

Disordered stretches follow at residues Met1–Glu22 and Trp106–Arg130.

In terms of assembly, interacts with host HDAC1 and HDAC2, these interactions suppress HDAC activities. Interacts with protein ORF57. Interacts with protein vPK. Sumoylated.

It functions in the pathway protein modification; protein sumoylation. Functionally, SUMO E3 ligase that plays a role in viral gene regulation and is essential for viral reactivation. Disrupts host G1 cell cycle control thus allowing viral transcription and translation to proceed at the early stages of infection. Catalyzes its own SUMO modification as well as that of its interacting partners such as host TP53 and RB1. Regulates viral gene expression and reactivation and may mediate the SUMOylation of viral promoters in the low methylated 'Lys-9' histone H3 (H3K9me) region which results in a diminution of viral gene expression after reactivation. SUMOylates also host histone lysine demethylase 4A/KDM4A, an essential step for complete enrichment of SUMO-2/3 on the viral genome during viral transactivation and reactivation. This Human herpesvirus 8 type P (isolate GK18) (HHV-8) protein is E3 SUMO-protein ligase K-bZIP (K8).